Reading from the N-terminus, the 1155-residue chain is uncharacterized protein (1155 aa).

An N-terminal signal peptide occupies residues 1-19; the sequence is MKKNIFITSLLILLLLLSS. C20 carries the N-palmitoyl cysteine lipid modification. A lipid anchor (S-diacylglycerol cysteine) is attached at C20. A run of 4 helical transmembrane segments spans residues 289–309, 395–415, 424–444, and 459–479; these read ISVSAILTLYIMFTVLSFLIG, LGFIYIILYLIALYFIFFLIF, ALITIGMIIIMGPIFICFMLF, and ISYALQPIILFAGIAFISMII.

Belongs to the TrbL/VirB6 family.

It localises to the cell membrane. This is an uncharacterized protein from Rickettsia prowazekii (strain Madrid E).